The chain runs to 231 residues: PX domain-containing protein 1 (231 aa).

Residues 1-134 (MASAVFEGTS…TFFERSPLDQ (134 aa)) enclose the PX domain.

This chain is PX domain-containing protein 1 (PXDC1), found in Bos taurus (Bovine).